The sequence spans 456 residues: MNVPRETIAAIATAQGRGGVGIVRISGPLAGAAAKAISGRELKPRFAHYGPFLSEQEEVLDEGIVLYFPGPNSFTGEDVLELQGHGGPIVLDMLLQRCLELGCRLARPGEFSERAFLNDKLDLAQAEAIADLIEASSAQAARNALRSLQGAFSQRVYNLTEQLIALRIYVEAAIDFPEEEIDFLADGHVLSMLDAVRDELSTVLREAGQGALLRDGMTVVIAGRPNAGKSSLLNALAGREAAIVTDIAGTTRDILREHIHIDGMPLHVVDTAGLRDTEDQVEKIGVERALKAISEADRVLLVVDATAAEAADPFALWPEFLEQRPDPAKVTLIRNKADLTGEPIALETCDDGHVTISLSAMAAGSGLELLRDHLKACMGYEQTSESSFSARRRHLEALHYASAALEHGRAQLTLAGAGELLAEDLRQAQQSLGEITGAFSSDDLLGRIFSSFCIGK.

Residues arginine 24, glutamate 81, and lysine 120 each coordinate (6S)-5-formyl-5,6,7,8-tetrahydrofolate. The TrmE-type G domain occupies 216 to 379 (GMTVVIAGRP…LRDHLKACMG (164 aa)). Residue asparagine 226 coordinates K(+). Residues 226 to 231 (NAGKSS), 245 to 251 (TDIAGTT), 270 to 273 (DTAG), and 335 to 338 (NKAD) each bind GTP. Residue serine 230 coordinates Mg(2+). Residues threonine 245, isoleucine 247, and threonine 250 each contribute to the K(+) site. Threonine 251 serves as a coordination point for Mg(2+). Lysine 456 is a (6S)-5-formyl-5,6,7,8-tetrahydrofolate binding site.

This sequence belongs to the TRAFAC class TrmE-Era-EngA-EngB-Septin-like GTPase superfamily. TrmE GTPase family. Homodimer. Heterotetramer of two MnmE and two MnmG subunits. Requires K(+) as cofactor.

Its subcellular location is the cytoplasm. Functionally, exhibits a very high intrinsic GTPase hydrolysis rate. Involved in the addition of a carboxymethylaminomethyl (cmnm) group at the wobble position (U34) of certain tRNAs, forming tRNA-cmnm(5)s(2)U34. This is tRNA modification GTPase MnmE from Pseudomonas fluorescens (strain ATCC BAA-477 / NRRL B-23932 / Pf-5).